Consider the following 143-residue polypeptide: Transcriptional regulator SlyA (143 aa).

The HTH marR-type domain occupies 2–135 (ESTLGSDLAR…LSGLIDKLEK (134 aa)). The segment at residues 49-72 (QIQLAKAIGIEQPSLVRTLDQLEE) is a DNA-binding region (H-T-H motif).

It belongs to the SlyA family. Homodimer.

Functionally, transcription regulator that can specifically activate or repress expression of target genes. This chain is Transcriptional regulator SlyA, found in Yersinia pestis (strain Pestoides F).